The chain runs to 384 residues: MAKTVVLVVAAGRGRRFGGDLPKQYHDLAGRMVLRHTLAAFATNPEIGAVRAVIHPDDRQLYDMAAAGLNLLEPVHGGATRQDSVRLGLDSLKDLNPDKVLIHDGARPFIDHGTIGRVIRALDRHPGALPVVPVADTLKRGQDGFVADTVDRANLFRAQTPQGFRYAEIVAAHHAVIGNELTDDAAVAEKAGLAVELVNGAEDNVKITTGADLERARCLFDGPGEVRSASGYDVHRFDPAKDACWLCGVPVPHEAGLLGHSDADVGLHALTDAVLGAISAGDIGHHFPPTDARWKGAASDQFLAHAGSLVTAKGGRIVNVDVTIICERPKVGPHRAAMAARVAEILGISQDRVSVKATTTEGLGFTGRKEGIAAQAMASVWLPR.

Residues 1-226 form a 2-C-methyl-D-erythritol 4-phosphate cytidylyltransferase region; that stretch reads MAKTVVLVVA…RCLFDGPGEV (226 aa). Positions 227 to 384 are 2-C-methyl-D-erythritol 2,4-cyclodiphosphate synthase; sequence RSASGYDVHR…QAMASVWLPR (158 aa). A divalent metal cation is bound by residues D233 and H235. Residues 233-235 and 260-261 contribute to the 4-CDP-2-C-methyl-D-erythritol 2-phosphate site; these read DVH and HS. H268 lines the a divalent metal cation pocket. 4-CDP-2-C-methyl-D-erythritol 2-phosphate-binding positions include 282–284, 358–361, F365, and R368; these read DIG and TTTE.

The protein in the N-terminal section; belongs to the IspD/TarI cytidylyltransferase family. IspD subfamily. This sequence in the C-terminal section; belongs to the IspF family. A divalent metal cation is required as a cofactor.

The catalysed reaction is 2-C-methyl-D-erythritol 4-phosphate + CTP + H(+) = 4-CDP-2-C-methyl-D-erythritol + diphosphate. It carries out the reaction 4-CDP-2-C-methyl-D-erythritol 2-phosphate = 2-C-methyl-D-erythritol 2,4-cyclic diphosphate + CMP. The protein operates within isoprenoid biosynthesis; isopentenyl diphosphate biosynthesis via DXP pathway; isopentenyl diphosphate from 1-deoxy-D-xylulose 5-phosphate: step 2/6. It participates in isoprenoid biosynthesis; isopentenyl diphosphate biosynthesis via DXP pathway; isopentenyl diphosphate from 1-deoxy-D-xylulose 5-phosphate: step 4/6. Functionally, bifunctional enzyme that catalyzes the formation of 4-diphosphocytidyl-2-C-methyl-D-erythritol from CTP and 2-C-methyl-D-erythritol 4-phosphate (MEP) (IspD), and catalyzes the conversion of 4-diphosphocytidyl-2-C-methyl-D-erythritol 2-phosphate (CDP-ME2P) to 2-C-methyl-D-erythritol 2,4-cyclodiphosphate (ME-CPP) with a corresponding release of cytidine 5-monophosphate (CMP) (IspF). This is Bifunctional enzyme IspD/IspF from Paramagnetospirillum magneticum (strain ATCC 700264 / AMB-1) (Magnetospirillum magneticum).